We begin with the raw amino-acid sequence, 417 residues long: Snake venom metalloproteinase kistomin (417 aa).

The signal sequence occupies residues 1-20 (MIEVLLVTICLAAFPYQGSS). A propeptide spanning residues 21–189 (IILESGNVND…KKPFRLNLTP (169 aa)) is cleaved from the precursor. The Peptidase M12B domain maps to 197–391 (AKVYLVIVAD…RKPECLFKKP (195 aa)). 3 disulfides stabilise this stretch: Cys308-Cys386, Cys348-Cys370, and Cys350-Cys353. His333 contacts Zn(2+). The active site involves Glu334. Zn(2+)-binding residues include His337 and His343. Residues 392–417 (LRTDTVSTPVSGNEPLEVITMDDFYA) constitute a propeptide that is removed on maturation.

This sequence belongs to the venom metalloproteinase (M12B) family. P-I subfamily. As to quaternary structure, monomer. Zn(2+) serves as cofactor. In terms of tissue distribution, expressed by the venom gland.

It is found in the secreted. Its activity is regulated as follows. Inhibited by EDTA, and O-phenanthrolene. In terms of biological role, snake venom zinc metalloprotease that inhibits platelet aggregation by binding specifically to platelet glycoprotein VI (GP6) and platelet glycoprotein Ib alpha (GP1BA). It inhibits the interaction between collagen and platelet GP6 by cleaving GP6 (at '225-Glu-|-Ala-226' and '238-Val-|-Phe-239' bonds), and inhibits vWF-induced platelet aggregation by cleaving GP1BA and vWF. Cleavage of GP1BA occurs at two distinct sites to generate two soluble fragments. It also cleaves alpha- (FGA) and subsequently the gamma-chain (FGG) of fibrinogen, leaving the beta-chain unaffected. It also inhibits collagen-, convulxin- and ristocetin-induced platelet aggregation. It blocks the adhesion of platelet to immobilized collagen, but only exerts a slight inhibition to fibrinogen. In vivo, it exerts potent antithrombotic effect. The chain is Snake venom metalloproteinase kistomin from Calloselasma rhodostoma (Malayan pit viper).